The sequence spans 211 residues: MYQPDFPPVPFRLGLYPVVDSVQWIERLLDAGVRTLQLRIKDRRDEEVEADVVAAIALGRRYNARLFINDYWRLAIKHQAYGVHLGQEDLQATDLNAIRAAGLRLGVSTHDDMEIDVALAARPSYIALGHVFPTQTKQMPSAPQGLEQLARHVERLADYPTVAIGGISLARAPAVIATGVGSIAVISAITQAADWRLATAQLLEIAGVGDE.

4-amino-2-methyl-5-(diphosphooxymethyl)pyrimidine-binding positions include Gln37 to Lys41 and Asn69. Mg(2+) contacts are provided by Asp70 and Asp89. 4-amino-2-methyl-5-(diphosphooxymethyl)pyrimidine is bound at residue Ser108. Thr134 to Thr136 lines the 2-[(2R,5Z)-2-carboxy-4-methylthiazol-5(2H)-ylidene]ethyl phosphate pocket. Residue Lys137 participates in 4-amino-2-methyl-5-(diphosphooxymethyl)pyrimidine binding. Residues Gly166 and Ile186–Ser187 each bind 2-[(2R,5Z)-2-carboxy-4-methylthiazol-5(2H)-ylidene]ethyl phosphate.

It belongs to the thiamine-phosphate synthase family. Mg(2+) serves as cofactor.

It carries out the reaction 2-[(2R,5Z)-2-carboxy-4-methylthiazol-5(2H)-ylidene]ethyl phosphate + 4-amino-2-methyl-5-(diphosphooxymethyl)pyrimidine + 2 H(+) = thiamine phosphate + CO2 + diphosphate. It catalyses the reaction 2-(2-carboxy-4-methylthiazol-5-yl)ethyl phosphate + 4-amino-2-methyl-5-(diphosphooxymethyl)pyrimidine + 2 H(+) = thiamine phosphate + CO2 + diphosphate. The enzyme catalyses 4-methyl-5-(2-phosphooxyethyl)-thiazole + 4-amino-2-methyl-5-(diphosphooxymethyl)pyrimidine + H(+) = thiamine phosphate + diphosphate. It participates in cofactor biosynthesis; thiamine diphosphate biosynthesis; thiamine phosphate from 4-amino-2-methyl-5-diphosphomethylpyrimidine and 4-methyl-5-(2-phosphoethyl)-thiazole: step 1/1. In terms of biological role, condenses 4-methyl-5-(beta-hydroxyethyl)thiazole monophosphate (THZ-P) and 2-methyl-4-amino-5-hydroxymethyl pyrimidine pyrophosphate (HMP-PP) to form thiamine monophosphate (TMP). The chain is Thiamine-phosphate synthase from Shigella boydii serotype 4 (strain Sb227).